Here is a 280-residue protein sequence, read N- to C-terminus: Bifunctional protein FolD (280 aa).

NADP(+) contacts are provided by residues 164–166 (GRS), Ser189, and Val230.

This sequence belongs to the tetrahydrofolate dehydrogenase/cyclohydrolase family. As to quaternary structure, homodimer.

It carries out the reaction (6R)-5,10-methylene-5,6,7,8-tetrahydrofolate + NADP(+) = (6R)-5,10-methenyltetrahydrofolate + NADPH. It catalyses the reaction (6R)-5,10-methenyltetrahydrofolate + H2O = (6R)-10-formyltetrahydrofolate + H(+). The protein operates within one-carbon metabolism; tetrahydrofolate interconversion. Its function is as follows. Catalyzes the oxidation of 5,10-methylenetetrahydrofolate to 5,10-methenyltetrahydrofolate and then the hydrolysis of 5,10-methenyltetrahydrofolate to 10-formyltetrahydrofolate. The polypeptide is Bifunctional protein FolD (Geotalea uraniireducens (strain Rf4) (Geobacter uraniireducens)).